Here is a 218-residue protein sequence, read N- to C-terminus: ATP synthase subunit a (218 aa).

5 helical membrane-spanning segments follow: residues 17–37, 75–95, 104–124, 162–184, and 196–216; these read IYST…GIFL, YLPL…SWFI, DLST…IFGI, LFGN…PFLL, and GTIQ…NFVH.

The protein belongs to the ATPase A chain family. F-type ATPases have 2 components, CF(1) - the catalytic core - and CF(0) - the membrane proton channel. CF(1) has five subunits: alpha(3), beta(3), gamma(1), delta(1), epsilon(1). CF(0) has three main subunits: a(1), b(2) and c(9-12). The alpha and beta chains form an alternating ring which encloses part of the gamma chain. CF(1) is attached to CF(0) by a central stalk formed by the gamma and epsilon chains, while a peripheral stalk is formed by the delta and b chains. In this bacterium the a and b subunits are transcribed but do not seem to be translated, thus the ATP synthase consists of the alpha, beta, gamma, delta, epsilon and c subunits.

It is found in the cell membrane. Key component of the proton channel; it plays a direct role in the translocation of protons across the membrane. In Moorella thermoacetica (strain ATCC 39073 / JCM 9320), this protein is ATP synthase subunit a.